The sequence spans 164 residues: Large ribosomal subunit protein uL11 (164 aa).

It belongs to the universal ribosomal protein uL11 family. As to quaternary structure, part of the ribosomal stalk of the 50S ribosomal subunit. Interacts with L10 and the large rRNA to form the base of the stalk. L10 forms an elongated spine to which L12 dimers bind in a sequential fashion forming a multimeric L10(L12)X complex.

Functionally, forms part of the ribosomal stalk which helps the ribosome interact with GTP-bound translation factors. This is Large ribosomal subunit protein uL11 from Pyrococcus furiosus (strain ATCC 43587 / DSM 3638 / JCM 8422 / Vc1).